We begin with the raw amino-acid sequence, 147 residues long: Transmembrane protein 210 (147 aa).

The signal sequence occupies residues 1-31 (MAPGPWPVSCLRGGPLGLTYLSLLLIPAAAG). Over 32-47 (TYCECSLGLSREALIA) the chain is Extracellular. The chain crosses the membrane as a helical span at residues 48-68 (LLVVLAGISASCFCALVIVAI). At 69–147 (GVLRAKGETC…PPPPPPLPPE (79 aa)) the chain is on the cytoplasmic side. Residues 128-147 (AIPMEASSEEPPPPPPLPPE) are disordered. The segment covering 137–147 (EPPPPPPLPPE) has biased composition (pro residues).

It localises to the membrane. The protein localises to the cytoplasmic vesicle. The protein resides in the secretory vesicle. It is found in the acrosome. This Homo sapiens (Human) protein is Transmembrane protein 210 (TMEM210).